The chain runs to 234 residues: Small ribosomal subunit protein eS4 (234 aa).

Residues 43-106 (MPIAVWLRDY…NEYYRVLLDE (64 aa)) enclose the S4 RNA-binding domain.

This sequence belongs to the eukaryotic ribosomal protein eS4 family.

The chain is Small ribosomal subunit protein eS4 from Nanoarchaeum equitans (strain Kin4-M).